We begin with the raw amino-acid sequence, 353 residues long: MPQKVRIALDAMGGDVGAAVVIPGAAIALSRHPDAEFLLFGDSAKIVPELDQHPRLKAVSRVIHTDVAVSMEDKPSQALRRGRKTSSMWLALEAVKKGEADVAVSAGNTGALVAMARFCLRMLEGIDRPALAAIWPTRRAKCVVLDLGATIGGDAHHLVALAAMGGALASVLFEKPRPTVGLLNIGVEEIKGHQEIREAGEMLRSMNLPQLDYIGFVEGDGIGKGEADVIVTEGFSGNIALKAAEGAVRQMMDLLRSAIKASWLAQIGYLLARGAFRVLREKIDPKNYNGSVVLGLNGIVVKSHGGSDAEGFARAVDVGYEMARFDLLTKINQTLNRDGGALAPAPVAQEAVS.

The protein belongs to the PlsX family. Homodimer. Probably interacts with PlsY.

It localises to the cytoplasm. It catalyses the reaction a fatty acyl-[ACP] + phosphate = an acyl phosphate + holo-[ACP]. Its pathway is lipid metabolism; phospholipid metabolism. Functionally, catalyzes the reversible formation of acyl-phosphate (acyl-PO(4)) from acyl-[acyl-carrier-protein] (acyl-ACP). This enzyme utilizes acyl-ACP as fatty acyl donor, but not acyl-CoA. This Bradyrhizobium sp. (strain BTAi1 / ATCC BAA-1182) protein is Phosphate acyltransferase.